A 107-amino-acid polypeptide reads, in one-letter code: UPF0145 protein Memar_1285 (107 aa).

This sequence belongs to the UPF0145 family.

The polypeptide is UPF0145 protein Memar_1285 (Methanoculleus marisnigri (strain ATCC 35101 / DSM 1498 / JR1)).